The primary structure comprises 129 residues: Small ribosomal subunit protein uS9 (129 aa).

The protein belongs to the universal ribosomal protein uS9 family.

This Pelodictyon phaeoclathratiforme (strain DSM 5477 / BU-1) protein is Small ribosomal subunit protein uS9.